We begin with the raw amino-acid sequence, 428 residues long: Somatostatin receptor type 3 (428 aa).

Residues 1 to 45 (MAAVTYPSSVPTTLDPGNASSAWPLDTSLGNASAGTSLAGLAVSG) lie on the Extracellular side of the membrane. N-linked (GlcNAc...) asparagine glycans are attached at residues Asn-18 and Asn-31. A helical transmembrane segment spans residues 46 to 71 (ILISLVYLVVCVVGLLGNSLVIYVVL). Residues 72–81 (RHTSSPSVTS) lie on the Cytoplasmic side of the membrane. Residues 82–103 (VYILNLALADELFMLGLPFLAA) traverse the membrane as a helical segment. Over 104–118 (QNALSYWPFGSLMCR) the chain is Extracellular. Cys-117 and Cys-192 are joined by a disulfide. The chain crosses the membrane as a helical span at residues 119-140 (LVMAVDGINQFTSIFCLTVMSV). Residues 141 to 162 (DRYLAVVHPTRSARWRTAPVAR) are Cytoplasmic-facing. Residues 163-182 (MVSAAVWVASAVVVLPVVVF) traverse the membrane as a helical segment. At 183–206 (SGVPRGMSTCHMQWPEPAAAWRTA) the chain is on the extracellular side. A helical transmembrane segment spans residues 207 to 232 (FIIYTAALGFFGPLLVICLCYLLIVV). Residues 233–266 (KVRSTTRRVRAPSCQWVQAPACQRRRRSERRVTR) are Cytoplasmic-facing. The chain crosses the membrane as a helical span at residues 267–288 (MVVAVVALFVLCWMPFYLLNIV). At 289 to 302 (NVVCPLPEEPAFFG) the chain is on the extracellular side. Residues 303-325 (LYFLVVALPYANSCANPILYGFL) traverse the membrane as a helical segment. Residues 326–428 (SYRFKQGFRR…GDKASTLSHL (103 aa)) lie on the Cytoplasmic side of the membrane. A phosphoserine mark is found at Ser-341, Ser-346, and Ser-351. The disordered stretch occupies residues 343-428 (RVRSQEPGSG…GDKASTLSHL (86 aa)). Phosphothreonine is present on Thr-357. A compositionally biased stretch (acidic residues) spans 357-370 (TEEEEDEEEEERRE). A compositionally biased stretch (polar residues) spans 385–412 (RLSQIAQPGPSGQQQRPCTGTAKEQQLL).

It belongs to the G-protein coupled receptor 1 family. In terms of assembly, homodimer and heterodimer with SSTR2. Heterodimerization with SSTR2 inactivates SSTR3 receptor function. Phosphorylated. Phosphorylation increases upon somatostatin binding. Densely expressed in cerebellum and at moderate levels in the amygdala, cortex, striatum, spleen, liver and pituitary.

The protein localises to the cell membrane. Functionally, receptor for somatostatin-14 and -28. This receptor is coupled via pertussis toxin sensitive G proteins to inhibition of adenylyl cyclase. The polypeptide is Somatostatin receptor type 3 (Sstr3) (Rattus norvegicus (Rat)).